Here is a 1397-residue protein sequence, read N- to C-terminus: Ankyrin repeat domain-containing protein 30A (1397 aa).

ANK repeat units follow at residues 72 to 101 (QKRTALHWACVNGHEEVVTFLVDRKCQLDV), 105 to 134 (EHRTPLMKALQCHQEACANILIDSGADINL), 138 to 167 (YGNTALHYAVYSEILSVVAKLLSHGAVIEV), 171 to 200 (ASLTPLLLSITKRSEQIVEFLLIKNANANA), 204 to 233 (YKCTALMLAVCHGSSEIVGMLLQQNVDVFA), and 237 to 271 (CGVTAEHYAVTCGFHHIHEQIMEYIRKLSKNHQNT). The span at 267–279 (NHQNTNPEGTSAG) shows a compositional bias: polar residues. 4 disordered regions span residues 267 to 376 (NHQN…TWPA), 453 to 482 (PTKESSTKASANDQRFPSESKQEEDEEYSC), 782 to 807 (QTLRADEILPSESKQKDYEESSWDSE), and 902 to 931 (TLRADQMFPSESKQKKVEENSWDSESLRET). Composition is skewed to basic and acidic residues over residues 290 to 304 (RTPDTAESLVEKTPD) and 312 to 326 (RTPDTAESLVEKTPD). The span at 455–467 (KESSTKASANDQR) shows a compositional bias: polar residues. 2 stretches are compositionally biased toward basic and acidic residues: residues 782-800 (QTLRADEILPSESKQKDYE) and 913-931 (SKQKKVEENSWDSESLRET). Coiled coils occupy residues 998–1188 (VLKK…KQDK) and 1282–1327 (EHAQ…FQLQ).

As to expression, mainly expressed in breast and testis. A very faint signal is detected in placenta. Also expressed in many breast cancer cells.

The protein is Ankyrin repeat domain-containing protein 30A (ANKRD30A) of Homo sapiens (Human).